A 318-amino-acid polypeptide reads, in one-letter code: Olfactory receptor 13C5 (318 aa).

At 1-25 (MEWENHTILVEFFLKGLSGHPRLEL) the chain is on the extracellular side. Asn-5 carries an N-linked (GlcNAc...) asparagine glycan. A helical transmembrane segment spans residues 26–46 (LFFVLIFIMYVVILLGNGTLI). At 47-54 (LISILDPH) the chain is on the cytoplasmic side. Residues 55–75 (LHTPMYFFLGNLSFLDICYTT) traverse the membrane as a helical segment. Topologically, residues 76–99 (TSIPSTLVSFLSERKTISLSGCAV) are extracellular. A disulfide bridge links Cys-97 with Cys-189. Residues 100–120 (QMFLSLAMGTTECVLLGVMAF) form a helical membrane-spanning segment. Over 121-139 (DRYVAICNPLRYPIIMSKD) the chain is Cytoplasmic. The chain crosses the membrane as a helical span at residues 140-160 (AYVPMAAGSWIIGAVNSAVQT). Residues 161 to 197 (VFVVQLPFCRNNIINHFTCEILAVMKLACADISGNEF) lie on the Extracellular side of the membrane. Residues 198–217 (ILLVTTTLFLLTPLLLIIVS) form a helical membrane-spanning segment. Residues 218 to 237 (YTLIILSIFKISSSEGRSKP) lie on the Cytoplasmic side of the membrane. The helical transmembrane segment at 238 to 258 (SSTCSARLTVVITFCGTIFLM) threads the bilayer. Residues 259 to 277 (YMKPKSQETLNSDDLDATD) lie on the Extracellular side of the membrane. The chain crosses the membrane as a helical span at residues 278 to 298 (KLIFIFYRVMTPMMNPLIYSL). Residues 299 to 318 (RNKDVKEAVKHLLRRKNFNK) lie on the Cytoplasmic side of the membrane.

Belongs to the G-protein coupled receptor 1 family.

It localises to the cell membrane. In terms of biological role, odorant receptor. The polypeptide is Olfactory receptor 13C5 (OR13C5) (Homo sapiens (Human)).